Reading from the N-terminus, the 198-residue chain is Holliday junction resolvase RecU (198 aa).

A disordered region spans residues 1 to 21; that stretch reads MVNYPHKLSSQKRQPSLSQPK. Residues 11–21 are compositionally biased toward polar residues; it reads QKRQPSLSQPK. Positions 81, 83, 96, and 115 each coordinate Mg(2+).

This sequence belongs to the RecU family. The cofactor is Mg(2+).

The protein localises to the cytoplasm. The enzyme catalyses Endonucleolytic cleavage at a junction such as a reciprocal single-stranded crossover between two homologous DNA duplexes (Holliday junction).. Its function is as follows. Endonuclease that resolves Holliday junction intermediates in genetic recombination. Cleaves mobile four-strand junctions by introducing symmetrical nicks in paired strands. Promotes annealing of linear ssDNA with homologous dsDNA. Required for DNA repair, homologous recombination and chromosome segregation. The chain is Holliday junction resolvase RecU from Streptococcus pneumoniae (strain Taiwan19F-14).